The chain runs to 124 residues: Small ribosomal subunit protein uS12 (124 aa).

Asp-89 carries the post-translational modification 3-methylthioaspartic acid. The tract at residues 105 to 124 (AGVKDRKKGRSKYGAKRPKA) is disordered. Residues 109 to 124 (DRKKGRSKYGAKRPKA) show a composition bias toward basic residues.

This sequence belongs to the universal ribosomal protein uS12 family. As to quaternary structure, part of the 30S ribosomal subunit. Contacts proteins S8 and S17. May interact with IF1 in the 30S initiation complex.

Functionally, with S4 and S5 plays an important role in translational accuracy. Its function is as follows. Interacts with and stabilizes bases of the 16S rRNA that are involved in tRNA selection in the A site and with the mRNA backbone. Located at the interface of the 30S and 50S subunits, it traverses the body of the 30S subunit contacting proteins on the other side and probably holding the rRNA structure together. The combined cluster of proteins S8, S12 and S17 appears to hold together the shoulder and platform of the 30S subunit. The protein is Small ribosomal subunit protein uS12 of Dichelobacter nodosus (strain VCS1703A).